The sequence spans 854 residues: Discoidin domain-containing receptor 2 (854 aa).

An N-terminal signal peptide occupies residues 1 to 21 (MIPIPRMPLVLLLLLLILGSA). Topologically, residues 22–399 (KAQVNPAICR…MLKVDDSNTR (378 aa)) are extracellular. Residues 30–185 (CRYPLGMSGG…VCMRVELYGC (156 aa)) enclose the F5/8 type C domain. 2 disulfide bridges follow: Cys30–Cys185 and Cys73–Cys177. N-linked (GlcNAc...) asparagine glycosylation is found at Asn121, Asn213, Asn261, Asn280, and Asn372. The helical transmembrane segment at 400 to 421 (ILIGCLVAIIFILLAIIVIILW) threads the bilayer. Topologically, residues 422–854 (RQFWQKMLEK…HLLLLQQGAE (433 aa)) are cytoplasmic. The tract at residues 452-471 (SMFNNNRSSSPSEQESNSTY) is disordered. Over residues 455-469 (NNNRSSSPSEQESNS) the composition is skewed to low complexity. At Tyr471 the chain carries Phosphotyrosine; by SRC and autocatalysis. The region spanning 563–848 (LAFKEKLGEG…PSFQEIHLLL (286 aa)) is the Protein kinase domain. Residues 569-577 (LGEGQFGEV) and Lys608 contribute to the ATP site. Asp709 serves as the catalytic Proton acceptor. Phosphotyrosine; by SRC and autocatalysis occurs at positions 735, 739, and 740.

Belongs to the protein kinase superfamily. Tyr protein kinase family. Insulin receptor subfamily. In terms of assembly, binds hydroxyproline-rich sequence motifs in fibrillar, glycosylated collagen, such as the GQOGVMGFO motif, where O stands for hydroxyproline. Interacts with SRC. Interacts (tyrosine phosphorylated) with SHC1. Post-translationally, N-glycosylated. In terms of processing, tyrosine phosphorylated in response to collagen binding. Phosphorylated by SRC; this is required for activation and subsequent autophosphorylation on additional tyrosine residues. Widely expressed. Detected in lung, ovary, skin and in testis Leydig cells (at protein level). Widely expressed. Detected at high levels in heart, lung, skeletal muscle, central nervous system (CNS) and kidney, and at lower levels in brain and testis. Detected in chondrocytes in tibia growth plates of young mice.

It localises to the cell membrane. It catalyses the reaction L-tyrosyl-[protein] + ATP = O-phospho-L-tyrosyl-[protein] + ADP + H(+). With respect to regulation, present in an inactive state in the absence of collagen binding and phosphorylation by SRC. Tyrosine phosphorylation enhances the affinity for ATP and the catalytic activity. Its function is as follows. Tyrosine kinase that functions as a cell surface receptor for fibrillar collagen and regulates cell differentiation, remodeling of the extracellular matrix, cell migration and cell proliferation. Required for normal bone development. Regulates osteoblast differentiation and chondrocyte maturation via a signaling pathway that involves MAP kinases and leads to the activation of the transcription factor RUNX2. Regulates remodeling of the extracellular matrix by up-regulation of the collagenases MMP1, MMP2 and MMP13, and thereby facilitates cell migration and tumor cell invasion. Promotes fibroblast migration and proliferation, and thereby contributes to cutaneous wound healing. This Mus musculus (Mouse) protein is Discoidin domain-containing receptor 2 (Ddr2).